Reading from the N-terminus, the 490-residue chain is Glutamate--tRNA ligase (490 aa).

The 'HIGH' region signature appears at 9–19 (PSPTGLQHIGG). Residues 251-255 (KLSKR) carry the 'KMSKS' region motif. An ATP-binding site is contributed by Lys254.

Belongs to the class-I aminoacyl-tRNA synthetase family. Glutamate--tRNA ligase type 1 subfamily. Monomer.

The protein localises to the cytoplasm. It catalyses the reaction tRNA(Glu) + L-glutamate + ATP = L-glutamyl-tRNA(Glu) + AMP + diphosphate. In terms of biological role, catalyzes the attachment of glutamate to tRNA(Glu) in a two-step reaction: glutamate is first activated by ATP to form Glu-AMP and then transferred to the acceptor end of tRNA(Glu). The polypeptide is Glutamate--tRNA ligase (Borreliella afzelii (strain PKo) (Borrelia afzelii)).